The primary structure comprises 419 residues: Multifunctional CCA protein (419 aa).

Residues Gly-8 and Arg-11 each coordinate ATP. The CTP site is built by Gly-8 and Arg-11. Mg(2+) contacts are provided by Asp-21 and Asp-23. Residues Arg-91, Arg-137, and Arg-140 each coordinate ATP. CTP is bound by residues Arg-91, Arg-137, and Arg-140. Positions 226 to 327 constitute an HD domain; sequence TGVHLMMVLD…VRLFDRCDAW (102 aa).

This sequence belongs to the tRNA nucleotidyltransferase/poly(A) polymerase family. Bacterial CCA-adding enzyme type 1 subfamily. As to quaternary structure, monomer. Can also form homodimers and oligomers. Mg(2+) serves as cofactor. The cofactor is Ni(2+).

It catalyses the reaction a tRNA precursor + 2 CTP + ATP = a tRNA with a 3' CCA end + 3 diphosphate. The enzyme catalyses a tRNA with a 3' CCA end + 2 CTP + ATP = a tRNA with a 3' CCACCA end + 3 diphosphate. Its function is as follows. Catalyzes the addition and repair of the essential 3'-terminal CCA sequence in tRNAs without using a nucleic acid template. Adds these three nucleotides in the order of C, C, and A to the tRNA nucleotide-73, using CTP and ATP as substrates and producing inorganic pyrophosphate. tRNA 3'-terminal CCA addition is required both for tRNA processing and repair. Also involved in tRNA surveillance by mediating tandem CCA addition to generate a CCACCA at the 3' terminus of unstable tRNAs. While stable tRNAs receive only 3'-terminal CCA, unstable tRNAs are marked with CCACCA and rapidly degraded. The chain is Multifunctional CCA protein from Leptothrix cholodnii (strain ATCC 51168 / LMG 8142 / SP-6) (Leptothrix discophora (strain SP-6)).